A 538-amino-acid polypeptide reads, in one-letter code: Sterile alpha motif domain-containing protein 1 (538 aa).

A compositionally biased stretch (pro residues) spans 1–11 (MAGPPALPPPE). Disordered stretches follow at residues 1–30 (MAGP…ASPH) and 92–247 (SYRN…GAAR). Positions 12–29 (TAAAATTAAAASSSAASP) are enriched in low complexity. The SAMD1-like winged helix (WH) domain occupies 23-99 (SSSAASPHYQ…SISYRNAARV (77 aa)). Thr-107 is modified (phosphothreonine). A compositionally biased stretch (low complexity) spans 115 to 125 (PRGAPAAAAAA). Residues 126-139 (APPPTPAPPPPPAP) show a composition bias toward pro residues. Residues 140-158 (VAAAAPARAPRAAAAAATA) are compositionally biased toward low complexity. Ser-161 is modified (phosphoserine). Residues 168 to 177 (GPRAQRAAPL) are compositionally biased toward low complexity. The span at 178 to 236 (AAPPPAPAAPPAVAPPAGPRRAPPPAVAAREPPLPPPPQPPAPPQQQQPPPPQPQPPPE) shows a compositional bias: pro residues. The segment covering 237–247 (GGAVRAGGAAR) has biased composition (low complexity). Ser-261 carries the phosphoserine modification. Over residues 282 to 291 (AARGRLERTR) the composition is skewed to basic and acidic residues. A disordered region spans residues 282 to 458 (AARGRLERTR…PPGRKEKPSD (177 aa)). The segment covering 328-351 (KEEEEDDDEDEDEEDDVSEGSEVP) has biased composition (acidic residues). The segment covering 425–436 (SPSPVPLPPGKP) has biased composition (pro residues). The SAM domain occupies 462–530 (WTVMDVVEYF…KVLQQGHFED (69 aa)).

In terms of assembly, homopolymerize into a closed pentameric ring. Interacts (via SAM domain) with L3MBTL3 (via SAM domain); the interaction mediates L3MBTL3 binding to chromatin. Interacts (via WH domain) with KDM1A; the interaction modulates KDM1A function. In terms of tissue distribution, expressed in atherosclerotic lesions, not in normal intima. Expressed in foam cells.

It localises to the nucleus. The protein localises to the chromosome. Its subcellular location is the secreted. In terms of biological role, unmethylated CpG islands (CGIs)-binding protein which localizes to H3K4me3-decorated CGIs, where it acts as a transcriptional repressor. Tethers L3MBTL3 to chromatin and interacts with the KDM1A histone demethylase complex to modulate H3K4me2 and H3K4me3 levels at CGIs. Plays a role in atherogenesis by binding with LDL on cell surface and promoting LDL oxidation which leads to the formation of foam cell. The polypeptide is Sterile alpha motif domain-containing protein 1 (Homo sapiens (Human)).